A 307-amino-acid polypeptide reads, in one-letter code: Probable aspartoacylase (307 aa).

2 residues coordinate Zn(2+): His-13 and Glu-16. Substrate-binding positions include Arg-55 and 62 to 63 (NR). Residue His-105 coordinates Zn(2+). 2 residues coordinate substrate: Glu-163 and Tyr-276.

Belongs to the AspA/AstE family. Aspartoacylase subfamily. Requires Zn(2+) as cofactor.

The enzyme catalyses an N-acyl-L-aspartate + H2O = a carboxylate + L-aspartate. This Prochlorococcus marinus (strain SARG / CCMP1375 / SS120) protein is Probable aspartoacylase.